Consider the following 259-residue polypeptide: 5'-nucleotidase SurE (259 aa).

A divalent metal cation contacts are provided by aspartate 8, aspartate 9, serine 41, and asparagine 99.

This sequence belongs to the SurE nucleotidase family. Requires a divalent metal cation as cofactor.

It is found in the cytoplasm. It catalyses the reaction a ribonucleoside 5'-phosphate + H2O = a ribonucleoside + phosphate. In terms of biological role, nucleotidase that shows phosphatase activity on nucleoside 5'-monophosphates. The sequence is that of 5'-nucleotidase SurE from Synechococcus sp. (strain JA-3-3Ab) (Cyanobacteria bacterium Yellowstone A-Prime).